Here is a 482-residue protein sequence, read N- to C-terminus: Retrovirus-related Pol polyprotein from type-1 retrotransposable element R2 (482 aa).

Residues 1-84 form the Reverse transcriptase domain; the sequence is AYADDLILFA…DYFKYLGSRY (84 aa). Residues 208-482 form a nucleic acid-binding endonuclease region; sequence QIPAVEKFYQ…ATGGRGRGDI (275 aa).

The catalysed reaction is DNA(n) + a 2'-deoxyribonucleoside 5'-triphosphate = DNA(n+1) + diphosphate. The sequence is that of Retrovirus-related Pol polyprotein from type-1 retrotransposable element R2 from Popillia japonica (Japanese beetle).